Consider the following 335-residue polypeptide: Biotin synthase (335 aa).

The Radical SAM core domain occupies 50-279 (ADIQRAALLS…KARVRLSAGR (230 aa)). Residues cysteine 65, cysteine 69, and cysteine 72 each coordinate [4Fe-4S] cluster. Positions 110, 142, 202, and 274 each coordinate [2Fe-2S] cluster.

The protein belongs to the radical SAM superfamily. Biotin synthase family. Homodimer. [4Fe-4S] cluster is required as a cofactor. It depends on [2Fe-2S] cluster as a cofactor.

The enzyme catalyses (4R,5S)-dethiobiotin + (sulfur carrier)-SH + 2 reduced [2Fe-2S]-[ferredoxin] + 2 S-adenosyl-L-methionine = (sulfur carrier)-H + biotin + 2 5'-deoxyadenosine + 2 L-methionine + 2 oxidized [2Fe-2S]-[ferredoxin]. It participates in cofactor biosynthesis; biotin biosynthesis; biotin from 7,8-diaminononanoate: step 2/2. Its function is as follows. Catalyzes the conversion of dethiobiotin (DTB) to biotin by the insertion of a sulfur atom into dethiobiotin via a radical-based mechanism. This Methylorubrum extorquens (strain CM4 / NCIMB 13688) (Methylobacterium extorquens) protein is Biotin synthase.